Here is a 156-residue protein sequence, read N- to C-terminus: Low molecular weight protein-tyrosine-phosphatase YfkJ (156 aa).

Catalysis depends on Cys8, which acts as the Nucleophile. Arg14 is an active-site residue. The Proton donor role is filled by Asp125.

It belongs to the low molecular weight phosphotyrosine protein phosphatase family.

The catalysed reaction is O-phospho-L-tyrosyl-[protein] + H2O = L-tyrosyl-[protein] + phosphate. Efficiently inhibited by Cu(2+) ion, Zn(2+) ion and N-ethylmaleimide, while the addition of Mg(2+), Ca(2+) or Fe(3+) ions has minimal effect. Inhibited in a competitive manner by vanadate. Functionally, dephosphorylates the phosphotyrosine-containing proteins. Involved in ethanol stress resistance. This Bacillus subtilis (strain 168) protein is Low molecular weight protein-tyrosine-phosphatase YfkJ (yfkJ).